A 172-amino-acid chain; its full sequence is Translation initiation factor IF-3 (172 aa).

This sequence belongs to the IF-3 family. Monomer.

Its subcellular location is the cytoplasm. Functionally, IF-3 binds to the 30S ribosomal subunit and shifts the equilibrium between 70S ribosomes and their 50S and 30S subunits in favor of the free subunits, thus enhancing the availability of 30S subunits on which protein synthesis initiation begins. The chain is Translation initiation factor IF-3 from Geobacter metallireducens (strain ATCC 53774 / DSM 7210 / GS-15).